A 236-amino-acid chain; its full sequence is Giant extracellular hemoglobin linker 2 chain (236 aa).

The LDL-receptor class A domain maps to 66 to 108; sequence NGCEPRHFQCGGSAMECISDLLTCDGSPDCANGADEDSDVCHI. Intrachain disulfides connect cysteine 68-cysteine 82, cysteine 75-cysteine 95, and cysteine 89-cysteine 106.

As to quaternary structure, disulfide-linked dimer of identical chains. A model is proposed for the subunit structure of the Tylorrhynchus hemoglobin, consisting of 216 polypeptides chains, 192 heme-containing chains, and 24 linker chains.

Functionally, acts as a linker for the assembly of heme-containing chains in the construction of giant hemoglobin. The sequence is that of Giant extracellular hemoglobin linker 2 chain from Tylorrhynchus heterochetus (Japanese palolo worm).